The primary structure comprises 498 residues: ATP synthase subunit beta, chloroplastic (498 aa).

172–179 (GGAGVGKT) is a binding site for ATP.

The protein belongs to the ATPase alpha/beta chains family. As to quaternary structure, F-type ATPases have 2 components, CF(1) - the catalytic core - and CF(0) - the membrane proton channel. CF(1) has five subunits: alpha(3), beta(3), gamma(1), delta(1), epsilon(1). CF(0) has four main subunits: a(1), b(1), b'(1) and c(9-12).

It is found in the plastid. The protein resides in the chloroplast thylakoid membrane. It carries out the reaction ATP + H2O + 4 H(+)(in) = ADP + phosphate + 5 H(+)(out). In terms of biological role, produces ATP from ADP in the presence of a proton gradient across the membrane. The catalytic sites are hosted primarily by the beta subunits. The sequence is that of ATP synthase subunit beta, chloroplastic from Triticum aestivum (Wheat).